The sequence spans 126 residues: Aspartate 1-decarboxylase (126 aa).

Residue serine 25 is the Schiff-base intermediate with substrate; via pyruvic acid of the active site. Residue serine 25 is modified to Pyruvic acid (Ser). A substrate-binding site is contributed by threonine 57. The active-site Proton donor is tyrosine 58. 72 to 74 serves as a coordination point for substrate; that stretch reads GAT.

It belongs to the PanD family. As to quaternary structure, heterooctamer of four alpha and four beta subunits. Requires pyruvate as cofactor. Is synthesized initially as an inactive proenzyme, which is activated by self-cleavage at a specific serine bond to produce a beta-subunit with a hydroxyl group at its C-terminus and an alpha-subunit with a pyruvoyl group at its N-terminus.

The protein localises to the cytoplasm. The catalysed reaction is L-aspartate + H(+) = beta-alanine + CO2. It participates in cofactor biosynthesis; (R)-pantothenate biosynthesis; beta-alanine from L-aspartate: step 1/1. Its function is as follows. Catalyzes the pyruvoyl-dependent decarboxylation of aspartate to produce beta-alanine. The sequence is that of Aspartate 1-decarboxylase from Campylobacter jejuni subsp. doylei (strain ATCC BAA-1458 / RM4099 / 269.97).